A 205-amino-acid chain; its full sequence is Glycerol-3-phosphate acyltransferase (205 aa).

Over 1-3 (MSA) the chain is Periplasmic. A helical membrane pass occupies residues 4 to 24 (IAPGMILFAYLCGSISSAILV). Residues 25–52 (CRIAGLPDPRESGSGNPGATNVLRIGGK) are Cytoplasmic-facing. Residues 53-73 (GAAVAVLIFDILKGMLPVWGA) traverse the membrane as a helical segment. Topologically, residues 74–80 (YALGITP) are periplasmic. A helical transmembrane segment spans residues 81-101 (FWLGLIAIAACLGHIWPVFFG). The Cytoplasmic segment spans residues 102-111 (FKGGKGVATA). The helical transmembrane segment at 112–132 (FGAIAPIGWDLTGVIAGTWLL) threads the bilayer. Residues 133–137 (TVLLS) lie on the Periplasmic side of the membrane. A helical transmembrane segment spans residues 138 to 158 (GYSSLGAIVSALIAPFYVWWF). Over 159-205 (KPQFTFPVSMLSCLILLRHHDNIQRLWRRQETKIWTKLKKKREKESK) the chain is Cytoplasmic.

The protein belongs to the PlsY family. Probably interacts with PlsX.

Its subcellular location is the cell inner membrane. The catalysed reaction is sn-glycerol 3-phosphate + an acyl-CoA = a 1-acyl-sn-glycero-3-phosphate + CoA. It carries out the reaction a fatty acyl-[ACP] + sn-glycerol 3-phosphate = a 1-acyl-sn-glycero-3-phosphate + holo-[ACP]. It participates in lipid metabolism; phospholipid metabolism. Functionally, catalyzes the transfer of an acyl group from acyl-ACP to glycerol-3-phosphate (G3P) to form lysophosphatidic acid (LPA). This enzyme can also utilize acyl-CoA as fatty acyl donor, but not acyl-PO(4). The chain is Glycerol-3-phosphate acyltransferase from Salmonella arizonae (strain ATCC BAA-731 / CDC346-86 / RSK2980).